The chain runs to 349 residues: Isopentenyl-diphosphate delta-isomerase (349 aa).

6–7 (RK) serves as a coordination point for substrate. FMN contacts are provided by residues 62-64 (AMT), S93, and N122. Position 152 (Q152) interacts with substrate. A Mg(2+)-binding site is contributed by E153. FMN contacts are provided by residues K184, T214, 258 to 259 (GG), and 280 to 281 (AG).

Belongs to the IPP isomerase type 2 family. As to quaternary structure, homooctamer. Dimer of tetramers. FMN serves as cofactor. The cofactor is NADPH. Mg(2+) is required as a cofactor.

The protein localises to the cytoplasm. It carries out the reaction isopentenyl diphosphate = dimethylallyl diphosphate. In terms of biological role, involved in the biosynthesis of isoprenoids. Catalyzes the 1,3-allylic rearrangement of the homoallylic substrate isopentenyl (IPP) to its allylic isomer, dimethylallyl diphosphate (DMAPP). This Bacillus cereus (strain 03BB102) protein is Isopentenyl-diphosphate delta-isomerase.